We begin with the raw amino-acid sequence, 244 residues long: 5'-deoxynucleotidase (244 aa).

It carries out the reaction a 2'-deoxyribonucleoside 5'-phosphate + H2O = a 2'-deoxyribonucleoside + phosphate. Its function is as follows. Following host DNA degradation, is responsible for the degradation of 5'-dNMP's to deoxynucleosides that can be further excreted. Active on deoxynucleoside 5'-monophosphates but not active as a phosphatase on ribonucleotides, deoxynucleoside 5'-triphosphates, deoxynucleoside 3'-monophosphates, or deoxyoligonucleotides. The polypeptide is 5'-deoxynucleotidase (dmp) (Escherichia coli (Enterobacteria phage T5)).